Here is a 526-residue protein sequence, read N- to C-terminus: Sterol 14-alpha demethylase CYP51A (526 aa).

A helical transmembrane segment spans residues Ile-27 to Phe-47. Tyr-123 serves as a coordination point for lanosterol. Cys-470 contributes to the heme binding site.

The protein belongs to the cytochrome P450 family. Requires heme as cofactor.

Its subcellular location is the endoplasmic reticulum membrane. The enzyme catalyses a 14alpha-methyl steroid + 3 reduced [NADPH--hemoprotein reductase] + 3 O2 = a Delta(14) steroid + formate + 3 oxidized [NADPH--hemoprotein reductase] + 4 H2O + 4 H(+). It catalyses the reaction a 14alpha-methyl steroid + reduced [NADPH--hemoprotein reductase] + O2 = a 14alpha-hydroxymethyl steroid + oxidized [NADPH--hemoprotein reductase] + H2O + H(+). The catalysed reaction is a 14alpha-hydroxymethyl steroid + reduced [NADPH--hemoprotein reductase] + O2 = a 14alpha-formyl steroid + oxidized [NADPH--hemoprotein reductase] + 2 H2O + H(+). It carries out the reaction a 14alpha-formyl steroid + reduced [NADPH--hemoprotein reductase] + O2 = a Delta(14) steroid + formate + oxidized [NADPH--hemoprotein reductase] + H2O + 2 H(+). The enzyme catalyses lanosterol + 3 reduced [NADPH--hemoprotein reductase] + 3 O2 = 4,4-dimethyl-5alpha-cholesta-8,14,24-trien-3beta-ol + formate + 3 oxidized [NADPH--hemoprotein reductase] + 4 H2O + 4 H(+). It catalyses the reaction lanosterol + reduced [NADPH--hemoprotein reductase] + O2 = 32-hydroxylanosterol + oxidized [NADPH--hemoprotein reductase] + H2O + H(+). The catalysed reaction is 32-hydroxylanosterol + reduced [NADPH--hemoprotein reductase] + O2 = 32-oxolanosterol + oxidized [NADPH--hemoprotein reductase] + 2 H2O + H(+). It carries out the reaction 32-oxolanosterol + reduced [NADPH--hemoprotein reductase] + O2 = 4,4-dimethyl-5alpha-cholesta-8,14,24-trien-3beta-ol + formate + oxidized [NADPH--hemoprotein reductase] + H2O + 2 H(+). The enzyme catalyses eburicol + 3 reduced [NADPH--hemoprotein reductase] + 3 O2 = 14-demethyleburicol + formate + 3 oxidized [NADPH--hemoprotein reductase] + 4 H2O + 4 H(+). It catalyses the reaction eburicol + reduced [NADPH--hemoprotein reductase] + O2 = 32-hydroxyeburicol + oxidized [NADPH--hemoprotein reductase] + H2O + H(+). The catalysed reaction is 32-hydroxyeburicol + reduced [NADPH--hemoprotein reductase] + O2 = 32-oxoeburicol + oxidized [NADPH--hemoprotein reductase] + 2 H2O + H(+). It carries out the reaction 32-oxoeburicol + reduced [NADPH--hemoprotein reductase] + O2 = 14-demethyleburicol + formate + oxidized [NADPH--hemoprotein reductase] + H2O + 2 H(+). It functions in the pathway steroid metabolism; ergosterol biosynthesis. In terms of biological role, together with cyp51A and cyp51C, encodes the sterol 14alpha-demethylase that plays a critical role in the third module of ergosterol biosynthesis pathway, being ergosterol the major sterol component in fungal membranes that participates in a variety of functions. Essential for ascospore production. The third module or late pathway involves the ergosterol synthesis itself through consecutive reactions that mainly occur in the endoplasmic reticulum (ER) membrane. In filamentous fungi, during the initial step of this module, lanosterol (lanosta-8,24-dien-3beta-ol) can be metabolized to eburicol. Sterol 14alpha-demethylase catalyzes the three-step oxidative removal of the 14alpha-methyl group (C-32) of both these sterols in the form of formate, and converts eburicol and lanosterol to 14-demethyleburicol (4,4,24-trimethylergosta-8,14,24(28)-trienol) and 4,4-dimethyl-5alpha-cholesta-8,14,24-trien-3beta-ol, respectively, which are further metabolized by other enzymes in the pathway to ergosterol. Can also use substrates not intrinsic to fungi, such as 24,25-dihydrolanosterol (DHL), producing 4,4'-dimethyl-8,14-cholestadien-3-beta-ol, but at lower rates than the endogenous substrates. The polypeptide is Sterol 14-alpha demethylase CYP51A (Gibberella zeae (strain ATCC MYA-4620 / CBS 123657 / FGSC 9075 / NRRL 31084 / PH-1) (Wheat head blight fungus)).